Reading from the N-terminus, the 308-residue chain is Acetylglutamate kinase (308 aa).

Substrate contacts are provided by residues 67–68 (GG), Arg89, and Asn193.

The protein belongs to the acetylglutamate kinase family. ArgB subfamily.

It localises to the cytoplasm. The catalysed reaction is N-acetyl-L-glutamate + ATP = N-acetyl-L-glutamyl 5-phosphate + ADP. Its pathway is amino-acid biosynthesis; L-arginine biosynthesis; N(2)-acetyl-L-ornithine from L-glutamate: step 2/4. In terms of biological role, catalyzes the ATP-dependent phosphorylation of N-acetyl-L-glutamate. The chain is Acetylglutamate kinase from Nitratidesulfovibrio vulgaris (strain DP4) (Desulfovibrio vulgaris).